Reading from the N-terminus, the 571-residue chain is Proline--tRNA ligase (571 aa).

Belongs to the class-II aminoacyl-tRNA synthetase family. ProS type 1 subfamily. As to quaternary structure, homodimer.

It is found in the cytoplasm. The enzyme catalyses tRNA(Pro) + L-proline + ATP = L-prolyl-tRNA(Pro) + AMP + diphosphate. Functionally, catalyzes the attachment of proline to tRNA(Pro) in a two-step reaction: proline is first activated by ATP to form Pro-AMP and then transferred to the acceptor end of tRNA(Pro). As ProRS can inadvertently accommodate and process non-cognate amino acids such as alanine and cysteine, to avoid such errors it has two additional distinct editing activities against alanine. One activity is designated as 'pretransfer' editing and involves the tRNA(Pro)-independent hydrolysis of activated Ala-AMP. The other activity is designated 'posttransfer' editing and involves deacylation of mischarged Ala-tRNA(Pro). The misacylated Cys-tRNA(Pro) is not edited by ProRS. This Acinetobacter baumannii (strain ATCC 17978 / DSM 105126 / CIP 53.77 / LMG 1025 / NCDC KC755 / 5377) protein is Proline--tRNA ligase.